A 342-amino-acid chain; its full sequence is Putative TPR repeat-containing protein R856 (342 aa).

TPR repeat units lie at residues 36–69 (VHIF…IFNG), 77–110 (FYSV…IKDM), 119–152 (VYAL…NEKL), 161–194 (AFVL…YREK), 203–236 (AFTI…FNKI), 245–278 (AFSL…YKNV), and 291–324 (ASCL…FEST).

The protein is Putative TPR repeat-containing protein R856 of Acanthamoeba polyphaga mimivirus (APMV).